Reading from the N-terminus, the 256-residue chain is MPFSPQELLYEGKAKRIYRTADPRVYLCQYKDDATAFNAQKRGSIAGKGEVNCTVSSHVFAYLAQQGIPNHFLAQTGPTEMQVRALHILPLEVVVRNRTAGSLCQRLGLEQGLPIEPPLVEFYYKNDALGDPLVTPDHIRLLHLATPEQVEKLGSLALAVNTHLGNFWRRCRLELVDFKLEFGLDEEGQIWLADEISPDTCRLWDLQGTEPRVLDKDLFRFDLGDPAAGYQEVLQRVLQATDPNLPSPAARERGRG.

This sequence belongs to the SAICAR synthetase family.

It carries out the reaction 5-amino-1-(5-phospho-D-ribosyl)imidazole-4-carboxylate + L-aspartate + ATP = (2S)-2-[5-amino-1-(5-phospho-beta-D-ribosyl)imidazole-4-carboxamido]succinate + ADP + phosphate + 2 H(+). It functions in the pathway purine metabolism; IMP biosynthesis via de novo pathway; 5-amino-1-(5-phospho-D-ribosyl)imidazole-4-carboxamide from 5-amino-1-(5-phospho-D-ribosyl)imidazole-4-carboxylate: step 1/2. The sequence is that of Phosphoribosylaminoimidazole-succinocarboxamide synthase from Synechococcus sp. (strain JA-3-3Ab) (Cyanobacteria bacterium Yellowstone A-Prime).